The following is a 219-amino-acid chain: Cytidylate kinase (219 aa).

15-23 (GPAASGKGT) serves as a coordination point for ATP.

It belongs to the cytidylate kinase family. Type 1 subfamily.

Its subcellular location is the cytoplasm. It carries out the reaction CMP + ATP = CDP + ADP. The catalysed reaction is dCMP + ATP = dCDP + ADP. The protein is Cytidylate kinase of Brucella suis biovar 1 (strain 1330).